A 403-amino-acid chain; its full sequence is Phosphopentomutase (403 aa).

The Mn(2+) site is built by aspartate 13, aspartate 298, histidine 303, aspartate 339, histidine 340, and histidine 351.

Belongs to the phosphopentomutase family. The cofactor is Mn(2+).

The protein resides in the cytoplasm. It catalyses the reaction 2-deoxy-alpha-D-ribose 1-phosphate = 2-deoxy-D-ribose 5-phosphate. The enzyme catalyses alpha-D-ribose 1-phosphate = D-ribose 5-phosphate. The protein operates within carbohydrate degradation; 2-deoxy-D-ribose 1-phosphate degradation; D-glyceraldehyde 3-phosphate and acetaldehyde from 2-deoxy-alpha-D-ribose 1-phosphate: step 1/2. Functionally, isomerase that catalyzes the conversion of deoxy-ribose 1-phosphate (dRib-1-P) and ribose 1-phosphate (Rib-1-P) to deoxy-ribose 5-phosphate (dRib-5-P) and ribose 5-phosphate (Rib-5-P), respectively. This chain is Phosphopentomutase, found in Streptococcus pyogenes serotype M28 (strain MGAS6180).